Consider the following 116-residue polypeptide: uncharacterized protein (116 aa).

Residues 22–42 form a helical membrane-spanning segment; that stretch reads LIFLVVNLKVPAVGLELFLLV.

The protein localises to the membrane. This is an uncharacterized protein from Saccharomyces cerevisiae (strain ATCC 204508 / S288c) (Baker's yeast).